The primary structure comprises 200 residues: Protein GrpE (200 aa).

Residues 1–25 (MMSKQNKKDWKKFKDEHKEEHKVEN) show a composition bias toward basic and acidic residues. Positions 1 to 52 (MMSKQNKKDWKKFKDEHKEEHKVENEILEEETDEESQHQEPALGHPSYTALE) are disordered.

This sequence belongs to the GrpE family. As to quaternary structure, homodimer.

The protein localises to the cytoplasm. In terms of biological role, participates actively in the response to hyperosmotic and heat shock by preventing the aggregation of stress-denatured proteins, in association with DnaK and GrpE. It is the nucleotide exchange factor for DnaK and may function as a thermosensor. Unfolded proteins bind initially to DnaJ; upon interaction with the DnaJ-bound protein, DnaK hydrolyzes its bound ATP, resulting in the formation of a stable complex. GrpE releases ADP from DnaK; ATP binding to DnaK triggers the release of the substrate protein, thus completing the reaction cycle. Several rounds of ATP-dependent interactions between DnaJ, DnaK and GrpE are required for fully efficient folding. The chain is Protein GrpE from Legionella pneumophila subsp. pneumophila (strain Philadelphia 1 / ATCC 33152 / DSM 7513).